A 358-amino-acid chain; its full sequence is UPF0725 protein At4g29550 (358 aa).

The interval 31–82 is disordered; the sequence is LNKHPPSGSGWTDEDDDNDDVFSSSFISKEELSDAVHNDPPSGWTDEDDDDQ. The segment covering 58-67 has biased composition (basic and acidic residues); sequence SKEELSDAVH.

This sequence belongs to the UPF0725 (EMB2204) family.

In Arabidopsis thaliana (Mouse-ear cress), this protein is UPF0725 protein At4g29550.